Here is a 428-residue protein sequence, read N- to C-terminus: Trigger factor (428 aa).

The region spanning 163-248 is the PPIase FKBP-type domain; that stretch reads GDTVVIDFEG…VHEVKAKQLP (86 aa).

The protein belongs to the FKBP-type PPIase family. Tig subfamily.

It is found in the cytoplasm. It carries out the reaction [protein]-peptidylproline (omega=180) = [protein]-peptidylproline (omega=0). Involved in protein export. Acts as a chaperone by maintaining the newly synthesized protein in an open conformation. Functions as a peptidyl-prolyl cis-trans isomerase. In Geobacillus kaustophilus (strain HTA426), this protein is Trigger factor.